Reading from the N-terminus, the 187-residue chain is UPF0301 protein Sbal195_3177 (187 aa).

Belongs to the UPF0301 (AlgH) family.

This chain is UPF0301 protein Sbal195_3177, found in Shewanella baltica (strain OS195).